The chain runs to 25 residues: Large ribosomal subunit protein uL30 (25 aa).

This sequence belongs to the universal ribosomal protein uL30 family. As to quaternary structure, part of the 50S ribosomal subunit.

This is Large ribosomal subunit protein uL30 (rpmD) from Pseudomonas fluorescens biotype A.